The following is a 141-amino-acid chain: Large ribosomal subunit protein uL11 (141 aa).

Belongs to the universal ribosomal protein uL11 family. As to quaternary structure, part of the ribosomal stalk of the 50S ribosomal subunit. Interacts with L10 and the large rRNA to form the base of the stalk. L10 forms an elongated spine to which L12 dimers bind in a sequential fashion forming a multimeric L10(L12)X complex. One or more lysine residues are methylated.

In terms of biological role, forms part of the ribosomal stalk which helps the ribosome interact with GTP-bound translation factors. In Acetivibrio thermocellus (strain ATCC 27405 / DSM 1237 / JCM 9322 / NBRC 103400 / NCIMB 10682 / NRRL B-4536 / VPI 7372) (Clostridium thermocellum), this protein is Large ribosomal subunit protein uL11.